Consider the following 631-residue polypeptide: tRNA uridine 5-carboxymethylaminomethyl modification enzyme MnmG (631 aa).

FAD contacts are provided by residues Gly13–Gly18, Val125, and Ser180. Gly273–Phe287 serves as a coordination point for NAD(+). Gln370 lines the FAD pocket.

This sequence belongs to the MnmG family. Homodimer. Heterotetramer of two MnmE and two MnmG subunits. It depends on FAD as a cofactor.

Its subcellular location is the cytoplasm. NAD-binding protein involved in the addition of a carboxymethylaminomethyl (cmnm) group at the wobble position (U34) of certain tRNAs, forming tRNA-cmnm(5)s(2)U34. The sequence is that of tRNA uridine 5-carboxymethylaminomethyl modification enzyme MnmG from Vibrio atlanticus (strain LGP32) (Vibrio splendidus (strain Mel32)).